Reading from the N-terminus, the 108-residue chain is UPF0145 protein THA_1434 (108 aa).

This sequence belongs to the UPF0145 family.

The sequence is that of UPF0145 protein THA_1434 from Thermosipho africanus (strain TCF52B).